The following is a 758-amino-acid chain: MAQRKNAKSSGNSSSSGSGSGSTSAGSSSPGARRETKHGGHKNGRKGGLSGTSFFTWFMVIALLGVWTSVAVVWFDLVDYEEVLGKLGIYDADGDGDFDVDDAKVLLGLKERSTSEPAVPPEEAEPHTEPEEQVPVEAEPQNIEDEAKEQIQSLLHEMVHAEHVEGEDLQQEDGPTGEPQQEDDEFLMATDVDDRFETLEPEVSHEETEHSYHVEETVSQDCNQDMEEMMSEQENPDSSEPVVEDERLHHDTDDVTYQVYEEQAVYEPLENEGIEITEVTAPPEDNPVEDSQVIVEEVSIFPVEEQQEVPPETNRKTDDPEQKAKVKKKKPKLLNKFDKTIKAELDAAEKLRKRGKIEEAVNAFKELVRKYPQSPRARYGKAQCEDDLAEKRRSNEVLRGAIETYQEVASLPDVPADLLKLSLKRRSDRQQFLGHMRGSLLTLQRLVQLFPNDTSLKNDLGVGYLLIGDNDNAKKVYEEVLSVTPNDGFAKVHYGFILKAQNKIAESIPYLKEGIESGDPGTDDGRFYFHLGDAMQRVGNKEAYKWYELGHKRGHFASVWQRSLYNVNGLKAQPWWTPKETGYTELVKSLERNWKLIRDEGLAVMDKAKGLFLPEDENLREKGDWSQFTLWQQGRRNENACKGAPKTCTLLEKFPETTGCRRGQIKYSIMHPGTHVWPHTGPTNCRLRMHLGLVIPKEGCKIRCANETKTWEEGKVLIFDDSFEHEVWQDASSFRLIFIVDVWHPELTPQQRRSLPAI.

The disordered stretch occupies residues 1–46; the sequence is MAQRKNAKSSGNSSSSGSGSGSTSAGSSSPGARRETKHGGHKNGRK. Topologically, residues 1 to 53 are cytoplasmic; sequence MAQRKNAKSSGNSSSSGSGSGSTSAGSSSPGARRETKHGGHKNGRKGGLSGTS. Residues 9–31 are compositionally biased toward low complexity; that stretch reads SSGNSSSSGSGSGSTSAGSSSPG. Ser14 is modified (phosphoserine). A helical; Signal-anchor for type II membrane protein membrane pass occupies residues 54 to 74; that stretch reads FFTWFMVIALLGVWTSVAVVW. An N-linked (GlcNAc...) asparagine glycan is attached at Leu64. Topologically, residues 75-758 are lumenal; that stretch reads FDLVDYEEVL…PQQRRSLPAI (684 aa). The Ca(2+) site is built by Asp91, Asp93, Asp95, Asp97, and Asp102. 2 disordered regions span residues 111 to 140 and 304 to 324; these read ERST…EAEP and EEQQ…EQKA. A compositionally biased stretch (basic and acidic residues) spans 313 to 324; the sequence is TNRKTDDPEQKA. A TPR 1 repeat occupies 341–374; it reads IKAELDAAEKLRKRGKIEEAVNAFKELVRKYPQS. An N-linked (GlcNAc...) asparagine glycan is attached at Asn452. 3 TPR repeats span residues 454 to 487, 489 to 521, and 525 to 557; these read TSLK…TPND, FAKV…GDPG, and GRFY…GHFA. Residue Trp625 coordinates 2-oxoglutarate. The cysteines at positions 641 and 648 are disulfide-linked. Ser668 is a 2-oxoglutarate binding site. His679 contacts Fe cation. 688–690 provides a ligand contact to 2-oxoglutarate; that stretch reads RMH. N-linked (GlcNAc...) asparagine glycosylation is present at Asn706. His725 contacts Fe cation. Residue Arg735 participates in 2-oxoglutarate binding.

The protein belongs to the aspartyl/asparaginyl beta-hydroxylase family. In terms of assembly, monomer. Isoform 8 interacts with ORAI1 and STIM1. Isoform 4 interacts with CASQ2. The cofactor is Fe cation. Isoform 1 is detected in all tissues tested. Isoform 8 is mainly expressed in pancreas, heart, brain, kidney and liver. Isoform 8 is expressed in kidney (at protein level).

The protein localises to the endoplasmic reticulum membrane. The protein resides in the sarcoplasmic reticulum membrane. It catalyses the reaction L-aspartyl-[protein] + 2-oxoglutarate + O2 = 3-hydroxy-L-aspartyl-[protein] + succinate + CO2. Its function is as follows. Specifically hydroxylates an Asp or Asn residue in certain epidermal growth factor-like (EGF) domains of a number of proteins. In terms of biological role, membrane-bound Ca(2+)-sensing protein, which is a structural component of the ER-plasma membrane junctions. Isoform 8 regulates the activity of Ca(+2) released-activated Ca(+2) (CRAC) channels in T-cells. The sequence is that of Aspartyl/asparaginyl beta-hydroxylase (ASPH) from Homo sapiens (Human).